Consider the following 477-residue polypeptide: Ubiquitin carboxyl-terminal hydrolase 7 (477 aa).

One can recognise a Ubiquitin-like domain in the interval L2–I77. The USP domain occupies A104 to R473. The active-site Nucleophile is C113. The segment at M171 to G190 is calmodulin-binding. The disordered stretch occupies residues Q364–S401. Residues S371–D380 are compositionally biased toward basic and acidic residues. A compositionally biased stretch (polar residues) spans E382–G399. Catalysis depends on H425, which acts as the Proton acceptor.

This sequence belongs to the peptidase C19 family. In terms of assembly, interacts with calmodulin (CaM).

It catalyses the reaction Thiol-dependent hydrolysis of ester, thioester, amide, peptide and isopeptide bonds formed by the C-terminal Gly of ubiquitin (a 76-residue protein attached to proteins as an intracellular targeting signal).. In terms of biological role, recognizes and hydrolyzes the peptide bond at the C-terminal Gly of ubiquitin. Involved in the processing of poly-ubiquitin precursors as well as that of ubiquitinated proteins. The protein is Ubiquitin carboxyl-terminal hydrolase 7 (UBP7) of Arabidopsis thaliana (Mouse-ear cress).